The following is a 624-amino-acid chain: Polygalacturonase 1 beta-like protein 2 (624 aa).

A signal peptide spans 1 to 26 (MNNIEATLFLCFFCIFSSSNVHFAGA). Residues 121–124 (FAAY) form an FXXY 1 repeat. A glycan (N-linked (GlcNAc...) asparagine) is linked at N128. 11 FXXY repeats span residues 129-132 (FTNY), 143-146 (FKNY), 157-160 (FRRY), 171-174 (FTNY), 185-188 (FTTY), 199-202 (FTNY), 213-216 (FTSY), 227-230 (FTTY), 241-244 (FTSY), 255-258 (FSGY), and 269-272 (FTKY). An N-linked (GlcNAc...) asparagine glycan is attached at N145. Residues 199-219 (FTNYNTDANEPNGRFTSYSDK) form a disordered region. Residue N280 is glycosylated (N-linked (GlcNAc...) asparagine). 5 FXXY repeats span residues 283–286 (FTSY), 297–300 (FKGY), 311–314 (FKNY), 325–328 (FSSY), and 339–342 (FVNY). N352 carries an N-linked (GlcNAc...) asparagine glycan. The stretch at 353-356 (FTGY) is one FXXY 18 repeat. N364 is a glycosylation site (N-linked (GlcNAc...) asparagine). FXXY repeat units follow at residues 367 to 370 (FKTY), 376 to 379 (FKVY), and 386 to 389 (FARY). N-linked (GlcNAc...) asparagine glycans are attached at residues N392 and N463. Residues 409-623 (FFREAMLKEG…FENDMTWNII (215 aa)) form the BURP domain.

As to expression, expressed in flowers and stems.

The protein localises to the secreted. Its subcellular location is the extracellular space. It is found in the apoplast. The protein resides in the cell wall. In terms of biological role, involved in cell size determination. The protein is Polygalacturonase 1 beta-like protein 2 of Arabidopsis thaliana (Mouse-ear cress).